We begin with the raw amino-acid sequence, 110 residues long: Small ribosomal subunit protein bS16 (110 aa).

A compositionally biased stretch (basic and acidic residues) spans 81–104; that stretch reads VRPAEVLGKQKQEKERSAKKKDAA. Residues 81–110 are disordered; that stretch reads VRPAEVLGKQKQEKERSAKKKDAAASETSE.

Belongs to the bacterial ribosomal protein bS16 family.

In Prochlorococcus marinus (strain NATL2A), this protein is Small ribosomal subunit protein bS16.